The sequence spans 407 residues: MAIENSKTGVKKVVLAYSGGLDTSAIIPWLKENYDNCEIVAFCADVGQGEEELVGLTEKALASGASECHIVDLKEEFVKDYIYPTIATGAIYEGTYLLGTSMARPIIAKAQVEVARKVGADALCHGCTGKGNDQVRFEGCFAALAPDLKVIAPWREWDMESREDLLAYLAERNIKTSASATKIYSRDANAWHISHEGGELEDPWNEPSKQVWTMTVDPLDAPDEPEYVTLKIENARVTEVNGEALSPYQALMKLNAIAAPHGVGRIDITENRLVGMKSRGCYETPGGTVMFAALRAVEELVLDKSSREWREQVAARMAHLVYDGRWFTPLCDSLLAASESLATMVNGEVVVKLYKGQAVPVKKRSPNSLYSEAFATFGQDSVYDQKHAEGFIRLYSLASRIRAYNTK.

Residues 16–24 and alanine 44 each bind ATP; that span reads AYSGGLDTS. L-citrulline-binding residues include tyrosine 96 and serine 101. Glycine 126 lines the ATP pocket. Positions 128, 132, and 133 each coordinate L-aspartate. An L-citrulline-binding site is contributed by asparagine 132. Positions 136, 185, 194, 270, and 282 each coordinate L-citrulline.

Belongs to the argininosuccinate synthase family. Type 1 subfamily. In terms of assembly, homotetramer.

The protein localises to the cytoplasm. It catalyses the reaction L-citrulline + L-aspartate + ATP = 2-(N(omega)-L-arginino)succinate + AMP + diphosphate + H(+). Its pathway is amino-acid biosynthesis; L-arginine biosynthesis; L-arginine from L-ornithine and carbamoyl phosphate: step 2/3. The polypeptide is Argininosuccinate synthase (Shewanella amazonensis (strain ATCC BAA-1098 / SB2B)).